The sequence spans 134 residues: Small ribosomal subunit protein uS8 (134 aa).

Belongs to the universal ribosomal protein uS8 family. As to quaternary structure, part of the 30S ribosomal subunit. Contacts proteins S5 and S12.

In terms of biological role, one of the primary rRNA binding proteins, it binds directly to 16S rRNA central domain where it helps coordinate assembly of the platform of the 30S subunit. This is Small ribosomal subunit protein uS8 from Sphingopyxis alaskensis (strain DSM 13593 / LMG 18877 / RB2256) (Sphingomonas alaskensis).